Reading from the N-terminus, the 323-residue chain is tRNA U34 carboxymethyltransferase (323 aa).

Residues Lys-91, Trp-105, Lys-110, Gly-130, 181 to 182 (IE), Met-196, Tyr-200, and Arg-315 each bind carboxy-S-adenosyl-L-methionine.

This sequence belongs to the class I-like SAM-binding methyltransferase superfamily. CmoB family. In terms of assembly, homotetramer.

It catalyses the reaction carboxy-S-adenosyl-L-methionine + 5-hydroxyuridine(34) in tRNA = 5-carboxymethoxyuridine(34) in tRNA + S-adenosyl-L-homocysteine + H(+). Its function is as follows. Catalyzes carboxymethyl transfer from carboxy-S-adenosyl-L-methionine (Cx-SAM) to 5-hydroxyuridine (ho5U) to form 5-carboxymethoxyuridine (cmo5U) at position 34 in tRNAs. This chain is tRNA U34 carboxymethyltransferase, found in Serratia proteamaculans (strain 568).